Reading from the N-terminus, the 335-residue chain is E3 ubiquitin ligase rnf-121 (335 aa).

The Cytoplasmic segment spans residues 1–47 (MGQHGAIRLQNEVQEGMPPPHELTEEEQWAEEHRKMHEKHKGHEAMH). A helical membrane pass occupies residues 48–68 (MEMMVIFMISVIVGQIFLVTW). The Lumenal segment spans residues 69 to 72 (KRKH). The chain crosses the membrane as a helical span at residues 73–93 (FKSYQMCTLIGMLTIPVYVCF). At 94 to 99 (NRSWYR) the chain is on the cytoplasmic side. Residues 100–120 (FLATWLVFCIFSAFIWLKASA) form a helical membrane-spanning segment. The Lumenal segment spans residues 121 to 143 (QHISGGTPRFVYKWFLFLHKLSY). The chain crosses the membrane as a helical span at residues 144-164 (VLGVVGYLIMMGALLGFHVLF). Residues 165-168 (GVSQ) lie on the Cytoplasmic side of the membrane. Residues 169–189 (PTLMDAGILFMFYGVYYGVLG) traverse the membrane as a helical segment. At 190–335 (RDFAHICTAR…QGLTTWMGLE (146 aa)) the chain is on the lumenal side. The RING-type; atypical zinc-finger motif lies at 222-284 (CAVCGGRLDD…GKLQTCPYCK (63 aa)).

It belongs to the RNF121 family. In terms of tissue distribution, expressed in body wall muscles, the hypodermis, seam cells, vulval cells, spermathecal cells, uterine cells and the distal tip cell (at protein level).

It localises to the endoplasmic reticulum membrane. The protein resides in the golgi apparatus membrane. The catalysed reaction is S-ubiquitinyl-[E2 ubiquitin-conjugating enzyme]-L-cysteine + [acceptor protein]-L-lysine = [E2 ubiquitin-conjugating enzyme]-L-cysteine + N(6)-ubiquitinyl-[acceptor protein]-L-lysine.. Its pathway is protein modification; protein ubiquitination. E3 ubiquitin ligase which accepts ubiquitin and transfers it to substrates such as the beta-integrin subunit pat-3, promoting their degradation by the endoplasmic reticulum-associated degradation (ERAD) pathway which is a pathway involved in ubiquitin-dependent degradation of misfolded endoplasmic reticulum proteins. Negatively regulates the unfolded protein response to reduce endoplasmic reticulum stress. Required for the cessation of distal tip cell migration at the end of larval morphogenesis. Plays a role in germline and gonad development. The chain is E3 ubiquitin ligase rnf-121 from Caenorhabditis elegans.